The primary structure comprises 643 residues: Zinc finger protein 23 (643 aa).

Positions 1 to 43 (MLENYGNVASLGFPLLKPAVISQLEGGSELGGSSPLAAGTGLQ) constitute a KRAB domain. Lys-157 participates in a covalent cross-link: Glycyl lysine isopeptide (Lys-Gly) (interchain with G-Cter in SUMO2). The segment at 168 to 190 (FKCEELVEPFRCDSQLIQHQENN) adopts a C2H2-type 1; degenerate zinc-finger fold. C2H2-type zinc fingers lie at residues 196 to 218 (YQCS…QRLH), 224 to 246 (FKCV…QTIH), 252 to 274 (YQCK…QRIH), 280 to 302 (YQCK…QRVH), 308 to 330 (YECN…QRIH), 336 to 358 (YECN…QSIH), 364 to 386 (YQCK…QRIH), 392 to 414 (YECT…QRIH), 420 to 442 (YECN…LRIH), 448 to 470 (YECN…QRIH), 476 to 498 (FECN…HRIH), 504 to 526 (YQCK…QRIH), 532 to 554 (FKCM…QRIH), 560 to 582 (FQCK…QRSH), 588 to 610 (FRCV…QTVH), and 616 to 638 (YMCS…QSVH).

It belongs to the krueppel C2H2-type zinc-finger protein family.

It localises to the nucleus. Functionally, may be involved in transcriptional regulation. May have a role in embryonic development. The chain is Zinc finger protein 23 (ZNF23) from Homo sapiens (Human).